The sequence spans 206 residues: Cytochrome c oxidase assembly factor 8 (206 aa).

The N-terminal 39 residues, 1–39 (MLPCAAGARGRGAMVVLRAGKKTFLPPLCRAFACRGCQL), are a transit peptide targeting the mitochondrion.

Belongs to the COA8 family. In terms of processing, N-terminal mitochondrial targeting sequence is cleaved from the mature protein once in the mitochondrion. Post-translationally, in normal conditions, the cytoplasmic precursor protein is rapidly degraded by the ubiquitination-proteasome system (UPS). Oxidative stress induces protein stabilization and import into mitochondria where it protects COX from degradation. As to expression, expressed in fibroblasts.

It localises to the mitochondrion inner membrane. In terms of biological role, required for cytochrome c complex (COX) IV assembly and function Protects COX assembly from oxidation-induced degradation, COX being the terminal component of the mitochondrial respiratory chain. This Homo sapiens (Human) protein is Cytochrome c oxidase assembly factor 8.